The chain runs to 372 residues: Pyruvylated Gal-beta-1,3-epitope synthesis protein 5 (372 aa).

At 1–12 (MGLPLRIFAGNG) the chain is on the cytoplasmic side. A helical; Signal-anchor for type II membrane protein membrane pass occupies residues 13–35 (IGGWCLRLFLFGSLILLLRPLIF). Over 36 to 372 (YSNTTMKKLK…LRIIEQWKQL (337 aa)) the chain is Lumenal. N-linked (GlcNAc...) asparagine glycosylation is found at N38 and N128.

The protein localises to the golgi apparatus membrane. Involved in cell wall biogenesis. Has a role in the addition of Gal-beta1,3 moeities to galactomannans and their subsequent pyruvylation. Has a role in meiosis. The chain is Pyruvylated Gal-beta-1,3-epitope synthesis protein 5 (pvg5) from Schizosaccharomyces pombe (strain 972 / ATCC 24843) (Fission yeast).